The chain runs to 207 residues: MSYSGEQERQAPHMALVPMVVEQTARGERSYDIYSRLLKERIIFLTGQVEDYMANLVVAQMLFLEAENPEKDIYLYINSPGGVITAGMSIYDTMQFIKPDVSTICMGQACSMGAFLLTAGAKGKRICLPNSRVMIHQPLGGFQGQATDIEIHAKEILKVKAKMNELMAKHTGQPLEAIERDTERDRFLSASEAVEYGLVDSVFTNRG.

The active-site Nucleophile is Ser111. His136 is a catalytic residue.

The protein belongs to the peptidase S14 family. Fourteen ClpP subunits assemble into 2 heptameric rings which stack back to back to give a disk-like structure with a central cavity, resembling the structure of eukaryotic proteasomes.

It is found in the cytoplasm. The catalysed reaction is Hydrolysis of proteins to small peptides in the presence of ATP and magnesium. alpha-casein is the usual test substrate. In the absence of ATP, only oligopeptides shorter than five residues are hydrolyzed (such as succinyl-Leu-Tyr-|-NHMec, and Leu-Tyr-Leu-|-Tyr-Trp, in which cleavage of the -Tyr-|-Leu- and -Tyr-|-Trp bonds also occurs).. In terms of biological role, cleaves peptides in various proteins in a process that requires ATP hydrolysis. Has a chymotrypsin-like activity. Plays a major role in the degradation of misfolded proteins. This is ATP-dependent Clp protease proteolytic subunit from Pectobacterium atrosepticum (strain SCRI 1043 / ATCC BAA-672) (Erwinia carotovora subsp. atroseptica).